The sequence spans 146 residues: HTH-type transcriptional regulator FarR (146 aa).

Residues 7-139 (HASINIGLIQ…LKDLLAELAK (133 aa)) form the HTH marR-type domain. A DNA-binding region (H-T-H motif) is located at residues 53 to 76 (FQDLANQACILRPSLTGILTRLEK).

Repressor activity requires the presence of the Integration Host Factor (IHF), which binds to sequences located between FarR binding sites A and C. IHF binding to the promoter region stabilizes the binding of FarR to its binding sites A and C and as a consequence, enhances repression of the farAB operon. Functionally, negatively controls expression of the farAB operon by binding directly to the farAB promoter region. Binds to three sites (sites A, B and C) within the DNA sequence upstream of farA. Also represses its own expression. The sequence is that of HTH-type transcriptional regulator FarR from Neisseria gonorrhoeae.